The following is a 351-amino-acid chain: sn-glycerol-3-phosphate import ATP-binding protein UgpC (351 aa).

Residues 4 to 234 (ITLDNLVKAY…PATTFVAGFI (231 aa)) form the ABC transporter domain. 36 to 43 (GPSGCGKS) is an ATP binding site.

Belongs to the ABC transporter superfamily. sn-glycerol-3-phosphate importer (TC 3.A.1.1.3) family. The complex is composed of two ATP-binding proteins (UgpC), two transmembrane proteins (UgpA and UgpE) and a solute-binding protein (UgpB).

It is found in the cell inner membrane. It carries out the reaction sn-glycerol 3-phosphate(out) + ATP + H2O = sn-glycerol 3-phosphate(in) + ADP + phosphate + H(+). Part of the ABC transporter complex UgpBAEC involved in sn-glycerol-3-phosphate (G3P) import. Responsible for energy coupling to the transport system. This Ruegeria pomeroyi (strain ATCC 700808 / DSM 15171 / DSS-3) (Silicibacter pomeroyi) protein is sn-glycerol-3-phosphate import ATP-binding protein UgpC.